We begin with the raw amino-acid sequence, 1080 residues long: Ubiquitin carboxyl-terminal hydrolase 8 (1080 aa).

An MIT domain is found at 33–116 (TKNYIHSAQK…ESLKLRYEEA (84 aa)). A compositionally biased stretch (basic and acidic residues) spans 119–173 (RKQLEEKDRREEEQLQQQKRQEMGREDSGAAAKRSVENLLDSKTKTQRINGEKSE). Residues 119–176 (RKQLEEKDRREEEQLQQQKRQEMGREDSGAAAKRSVENLLDSKTKTQRINGEKSEGAA) are disordered. Phosphoserine is present on serine 160. A Rhodanese domain is found at 195 to 313 (KNTSLIIMDA…WLLCYPQFTT (119 aa)). A compositionally biased stretch (low complexity) spans 379 to 393 (ALAGPGAAPRAEASP). Disordered stretches follow at residues 379–455 (ALAG…TDEE), 468–605 (EKNK…RSEE), and 642–710 (PPEM…KPPC). At serine 392 the chain carries Phosphoserine. Residues 405–413 (PQVDRTKKP) carry the SH3-binding motif. The span at 417-427 (LPEDHRIKSEN) shows a compositional bias: basic and acidic residues. Serine 446 is subject to Phosphoserine. Composition is skewed to basic and acidic residues over residues 468-535 (EKNK…RELS), 549-577 (SKSEHEASDAKVPVEGKRCPTSEAQKRPA), and 593-605 (AQREPLTRARSEE). At threonine 569 the chain carries Phosphothreonine. A compositionally biased stretch (polar residues) spans 678–688 (SYSSPDITQAL). A phosphoserine mark is found at serine 680 and serine 681. Residues 739–1071 (TGLRNLGNTC…AAYILFYTSL (333 aa)) form the USP domain. Cysteine 748 serves as the catalytic Nucleophile. Residue threonine 907 is modified to Phosphothreonine. The Proton acceptor role is filled by histidine 1029.

The protein belongs to the peptidase C19 family. Forms a ternary complex with RNF128 and OTUB1. Interacts (via C-terminal UCH catalytic domain) with OTUB1 isoform 1. Interacts with STAM2 (via SH3 domain). Interacts with DNAJB3, EGFR, EPS15, RASGRF1, RNF41, YWHAE, YWHAG and YWHAZ. Interacts with NBR1, RASGRF1, RNF41 and IST1. Associates with the ESCRT-0 complex and with microtubules. Interacts with BIRC6/bruce and KIF23/MKLP1. In terms of processing, phosphorylation of Ser-680 is essential for interaction with YWHAE and for cytosol localization. Undergoes dephosphorylation at Ser-680 in the M phase. Tyrosine-phosphorylated in its N-terminal half in an EGFR-dependent manner. Ubiquitinated. Inactive form is mostly monoubiquitinated, but polyubiquitination happens too. Ubiquitination is increased in EGF-stimulated cells. Ubiquitination of active form is undetectable, suggesting a possibility that USP8 deubiquitinates itself, thereby regulating its own function. In terms of tissue distribution, highly expressed in testis. Expressed at intermediate level in brain.

The protein localises to the cytoplasm. Its subcellular location is the nucleus. It localises to the endosome membrane. It is found in the cell membrane. It carries out the reaction Thiol-dependent hydrolysis of ester, thioester, amide, peptide and isopeptide bonds formed by the C-terminal Gly of ubiquitin (a 76-residue protein attached to proteins as an intracellular targeting signal).. In terms of biological role, hydrolase that can remove conjugated ubiquitin from proteins and therefore plays an important regulatory role at the level of protein turnover by preventing degradation. Converts both 'Lys-48' an 'Lys-63'-linked ubiquitin chains. Catalytic activity is enhanced in the M phase. Involved in cell proliferation. Required to enter into S phase in response to serum stimulation. May regulate T-cell anergy mediated by RNF128 via the formation of a complex containing RNF128 and OTUB1. Probably regulates the stability of STAM2 and RASGRF1. Regulates endosomal ubiquitin dynamics, cargo sorting, membrane traffic at early endosomes, and maintenance of ESCRT-0 stability. The level of protein ubiquitination on endosomes is essential for maintaining the morphology of the organelle. Deubiquitinates EPS15 and controls tyrosine kinase stability. Removes conjugated ubiquitin from EGFR thus regulating EGFR degradation and downstream MAPK signaling. Involved in acrosome biogenesis through interaction with the spermatid ESCRT-0 complex and microtubules. Deubiquitinates BIRC6/bruce and KIF23/MKLP1. Deubiquitinates BACE1 which inhibits BACE1 lysosomal degradation and modulates BACE-mediated APP cleavage and amyloid-beta formation. The protein is Ubiquitin carboxyl-terminal hydrolase 8 of Mus musculus (Mouse).